Here is a 317-residue protein sequence, read N- to C-terminus: Acetyl-coenzyme A carboxylase carboxyl transferase subunit alpha (317 aa).

One can recognise a CoA carboxyltransferase C-terminal domain in the interval 33 to 294 (NLDDEITRLQ…KKRLLADLAD (262 aa)).

The protein belongs to the AccA family. Acetyl-CoA carboxylase is a heterohexamer composed of biotin carboxyl carrier protein (AccB), biotin carboxylase (AccC) and two subunits each of ACCase subunit alpha (AccA) and ACCase subunit beta (AccD).

The protein localises to the cytoplasm. It catalyses the reaction N(6)-carboxybiotinyl-L-lysyl-[protein] + acetyl-CoA = N(6)-biotinyl-L-lysyl-[protein] + malonyl-CoA. It functions in the pathway lipid metabolism; malonyl-CoA biosynthesis; malonyl-CoA from acetyl-CoA: step 1/1. In terms of biological role, component of the acetyl coenzyme A carboxylase (ACC) complex. First, biotin carboxylase catalyzes the carboxylation of biotin on its carrier protein (BCCP) and then the CO(2) group is transferred by the carboxyltransferase to acetyl-CoA to form malonyl-CoA. The sequence is that of Acetyl-coenzyme A carboxylase carboxyl transferase subunit alpha from Histophilus somni (strain 129Pt) (Haemophilus somnus).